Reading from the N-terminus, the 471-residue chain is Phosphatidylserine synthase 1 (471 aa).

A2 is subject to N-acetylalanine. Topologically, residues 2-35 are cytoplasmic; it reads ASCVGSRTLSKDDVNYRMHFRMINEQQVEDITID. Residues 36-56 traverse the membrane as a helical segment; the sequence is FFYRPHTITLLSFTIVSLMYF. At 57 to 72 the chain is on the lumenal side; sequence AFTRDDSVPEDNIWRG. The helical transmembrane segment at 73–93 threads the bilayer; the sequence is ILSVIFFFLIISVLAFPNGPF. The Cytoplasmic segment spans residues 94 to 102; that stretch reads TRPHPALWR. The chain crosses the membrane as a helical span at residues 103–123; sequence MVFGLSVLYFLFLVFLLFLNF. The Lumenal segment spans residues 124–160; that stretch reads EQVKSLMYWLDPNLRYATREADIMEYAVNCHVITWER. Residues 161–181 traverse the membrane as a helical segment; it reads IVSHFDIFAFGHFWGWAMKAL. Residues 182–186 are Cytoplasmic-facing; sequence LIRSY. Residues 187–207 form a helical membrane-spanning segment; it reads GLCWTISITWELTELFFMHLL. Topologically, residues 208 to 216 are lumenal; it reads PNFAECWWD. The helical transmembrane segment at 217-237 threads the bilayer; it reads QVILDILLCNGGGIWLGMVVC. At 238-286 the chain is on the cytoplasmic side; sequence RFLEMRTYHWASFKDIHTTTGKIKRAVLQFTPASWTYVRWFDPKSSFQR. Residues 287–307 form a helical membrane-spanning segment; it reads VAGVYLFMIIWQLTELNTFFL. At 308 to 309 the chain is on the lumenal side; it reads KH. A helical membrane pass occupies residues 310-330; sequence IFVFQASHPLSWCRILFIGCI. At 331-355 the chain is on the cytoplasmic side; that stretch reads TAPTVRQYYAYLTDTQCKRVGTQCW. A helical transmembrane segment spans residues 356-376; that stretch reads VFGVIGFLEAIVCIKFGQDLF. At 377 to 380 the chain is on the lumenal side; the sequence is SKTQ. Residues 381 to 401 traverse the membrane as a helical segment; that stretch reads ILYVVFWLLCVAFTTFLCLYG. The Cytoplasmic segment spans residues 402-471; the sequence is MVWYAEHYGH…SKVTNGVGKK (70 aa). 3 positions are modified to phosphoserine: S417, S440, and S452. The segment at 426 to 471 is disordered; the sequence is ISWHHGKGSKGSEDSPPKHSSNNESHSSRRRNRHSKSKVTNGVGKK. Residues 453 to 462 show a composition bias toward basic residues; sequence SRRRNRHSKS.

Belongs to the phosphatidyl serine synthase family.

It localises to the endoplasmic reticulum membrane. It catalyses the reaction a 1,2-diacyl-sn-glycero-3-phosphoethanolamine + L-serine = a 1,2-diacyl-sn-glycero-3-phospho-L-serine + ethanolamine. The catalysed reaction is a 1,2-diacyl-sn-glycero-3-phosphocholine + L-serine = a 1,2-diacyl-sn-glycero-3-phospho-L-serine + choline. It functions in the pathway phospholipid metabolism; phosphatidylserine biosynthesis. Its activity is regulated as follows. Inhibited by exogenous phosphatidylserine. Catalyzes a base-exchange reaction in which the polar head group of phosphatidylethanolamine (PE) or phosphatidylcholine (PC) is replaced by L-serine. Catalyzes mainly the conversion of phosphatidylcholine. Also converts, in vitro and to a lesser extent, phosphatidylethanolamine. The sequence is that of Phosphatidylserine synthase 1 (PTDSS1) from Cricetulus griseus (Chinese hamster).